The primary structure comprises 227 residues: Cytochrome c oxidase subunit 2 (227 aa).

Residues 1–14 are Mitochondrial intermembrane-facing; sequence MAYPMQLGFQDATS. Residues 15–45 form a helical membrane-spanning segment; it reads PIMEELLHFHDHTLMIVLLISSLVLYIISLM. Residues 46-59 are Mitochondrial matrix-facing; the sequence is LTTKLTHTSTMDAQ. Residues 60-87 form a helical membrane-spanning segment; that stretch reads EVETIWTILPAIILILIALPSLRILYMM. Residues 88–227 lie on the Mitochondrial intermembrane side of the membrane; sequence DEINNPSLTV…YFEKWSASML (140 aa). Cu cation-binding residues include His161, Cys196, Glu198, Cys200, His204, and Met207. Glu198 serves as a coordination point for Mg(2+). Phosphotyrosine is present on Tyr218.

The protein belongs to the cytochrome c oxidase subunit 2 family. As to quaternary structure, component of the cytochrome c oxidase (complex IV, CIV), a multisubunit enzyme composed of 14 subunits. The complex is composed of a catalytic core of 3 subunits MT-CO1, MT-CO2 and MT-CO3, encoded in the mitochondrial DNA, and 11 supernumerary subunits COX4I, COX5A, COX5B, COX6A, COX6B, COX6C, COX7A, COX7B, COX7C, COX8 and NDUFA4, which are encoded in the nuclear genome. The complex exists as a monomer or a dimer and forms supercomplexes (SCs) in the inner mitochondrial membrane with NADH-ubiquinone oxidoreductase (complex I, CI) and ubiquinol-cytochrome c oxidoreductase (cytochrome b-c1 complex, complex III, CIII), resulting in different assemblies (supercomplex SCI(1)III(2)IV(1) and megacomplex MCI(2)III(2)IV(2)). Found in a complex with TMEM177, COA6, COX18, COX20, SCO1 and SCO2. Interacts with TMEM177 in a COX20-dependent manner. Interacts with COX20. Interacts with COX16. Cu cation is required as a cofactor.

Its subcellular location is the mitochondrion inner membrane. The enzyme catalyses 4 Fe(II)-[cytochrome c] + O2 + 8 H(+)(in) = 4 Fe(III)-[cytochrome c] + 2 H2O + 4 H(+)(out). Its function is as follows. Component of the cytochrome c oxidase, the last enzyme in the mitochondrial electron transport chain which drives oxidative phosphorylation. The respiratory chain contains 3 multisubunit complexes succinate dehydrogenase (complex II, CII), ubiquinol-cytochrome c oxidoreductase (cytochrome b-c1 complex, complex III, CIII) and cytochrome c oxidase (complex IV, CIV), that cooperate to transfer electrons derived from NADH and succinate to molecular oxygen, creating an electrochemical gradient over the inner membrane that drives transmembrane transport and the ATP synthase. Cytochrome c oxidase is the component of the respiratory chain that catalyzes the reduction of oxygen to water. Electrons originating from reduced cytochrome c in the intermembrane space (IMS) are transferred via the dinuclear copper A center (CU(A)) of subunit 2 and heme A of subunit 1 to the active site in subunit 1, a binuclear center (BNC) formed by heme A3 and copper B (CU(B)). The BNC reduces molecular oxygen to 2 water molecules using 4 electrons from cytochrome c in the IMS and 4 protons from the mitochondrial matrix. In Bubalus depressicornis (Lowland anoa), this protein is Cytochrome c oxidase subunit 2 (MT-CO2).